A 415-amino-acid chain; its full sequence is Histidine--tRNA ligase (415 aa).

It belongs to the class-II aminoacyl-tRNA synthetase family. As to quaternary structure, homodimer.

The protein localises to the cytoplasm. It catalyses the reaction tRNA(His) + L-histidine + ATP = L-histidyl-tRNA(His) + AMP + diphosphate + H(+). The protein is Histidine--tRNA ligase of Rickettsia bellii (strain RML369-C).